Here is a 1443-residue protein sequence, read N- to C-terminus: Sterol 3-beta-glucosyltransferase ATG26 (1443 aa).

Positions Met1–Ala13 are enriched in low complexity. Disordered regions lie at residues Met1–Asn69 and Asn88–Thr187. Positions Gly18–Gln32 are enriched in basic and acidic residues. Positions Asp49–Asn58 are enriched in acidic residues. Residues Gln104–Leu117 show a composition bias toward polar residues. The span at Asp125 to Ser134 shows a compositional bias: basic residues. Positions Glu164 to His173 are enriched in acidic residues. The GRAM 1 domain maps to Leu240–Pro284. The PH domain occupies Glu289 to Phe385. The interval Glu463–His657 is disordered. Over residues Leu506–Ser525 the composition is skewed to low complexity. The span at Ser585–Gln614 shows a compositional bias: polar residues. Over residues Ser631–Pro642 the composition is skewed to basic residues. The GRAM 2 domain maps to Arg765–Met870. A coiled-coil region spans residues Asp883–Phe910. UDP-alpha-D-glucose is bound by residues Ser957, Arg958, Asp960, Ala1265, His1267, His1280, Ser1283, Gly1284, Thr1285, Asp1304, and Gln1305. The tract at residues Asn1385–Ala1443 is disordered. The segment covering Gly1405–Ser1419 has biased composition (basic and acidic residues).

Belongs to the glycosyltransferase 28 family.

The protein resides in the cytoplasm. It localises to the preautophagosomal structure membrane. The catalysed reaction is a sterol + UDP-alpha-D-glucose = a sterol 3-beta-D-glucoside + UDP + H(+). The enzyme catalyses ergosterol + UDP-alpha-D-glucose = ergosteryl 3-beta-D-glucoside + UDP + H(+). In terms of biological role, sterol glycosyltransferase responsible for the glycosylation of ergosterol to form ergosterol-glucoside. This Gibberella zeae (strain ATCC MYA-4620 / CBS 123657 / FGSC 9075 / NRRL 31084 / PH-1) (Wheat head blight fungus) protein is Sterol 3-beta-glucosyltransferase ATG26.